Reading from the N-terminus, the 1131-residue chain is MSSSRPAHSSSSSSRTRQSSRARILAQTTLDAELNAEYEESGDSFDYSKLVEAQRSTPPEQQGRSGKVIAYLQHIQRGKLIQPFGCLLALDEKSFRVIAFSENAPEMLTTVSHAVPNVDDPPKLGIGTNVRSLFTDPGATALQKALGFADVSLLNPILVQCKTSGKPFYAIVHRATGCLVVDFEPVKPTEFPATAAGALQSYKLAAKAISKIQSLPGGSMEALCNTVVKEVFDLTGYDRVMAYKFHEDEHGEVFAEITKPGIEPYIGLHYPATDIPQAARFLFMKNKVRMICDCRARSVKIIEDEALSIDISLCGSTLRAPHSCHLKYMENMNSIASLVMAVVVNENEEDDEPEPEQPPQQQKKKRLWGLIVCHHESPRYVPFPLRYACEFLAQVFAVHVNKEFELEKQIREKNILRMQTMLSDMLFKESSPLSIVSGSPNIMDLVKCDGAALLYGDKVWRLQTAPTESQIRDIAFWLSEVHGDSTGLSTDSLQDAGYPGAASLGDMICGMAVAKITSKDILFWFRSHTAAEIKWGGAKHDPSDKDDNRRMHPRLSFKAFLEVVKTKSLPWSDYEMDAIHSLQLILRGTLNDASKPAQASGLDNQIGDLKLDGLAELQAVTSEMVRLMETATVPILAVDGNGLVNGWNQKVAELSGLRVDEAIGRHILTLVEDSSVSLVQRMLYLALQGREEKEVRFELKTHGSKRDDGPVILVVNACASRDLHDHVVGVCFVAQDMTVHKLVMDKFTRVEGDYKAIIHNPNPLIPPIFGADQFGWCSEWNAAMTKLTGWHRDEVVDKMLLGEVFNSSNASCLLKSKDAFVRLCIVINSALAGEEAEKASFGFFDRNEKYVECLLSVNRKVNADGVVTGVFCFIHVPSDDLQHALHVQQASEQTAQRKLKAFSYMRHAINKPLSGMLYSRETLKSTGLNEEQMRQVRVGDNCHRQLNKILADLDQDNITDKSSCLDLDMAEFVLQDVVVSAVSQVLIGCQAKGIRVACNLPERSMKQKVYGDGIRLQQIVSDFLFVSVKFSPAGGSVDISSKLTKNSIGENLHLIDFELRIKHRGAGVPAEILSQMYEEDNKEQSEEGFSLAVSRNLLRLMNGDIRHLREAGMSTFILTAELAAAPSAVGR.

A disordered region spans residues 1-23; that stretch reads MSSSRPAHSSSSSSRTRQSSRAR. One can recognise a GAF domain in the interval 219 to 404; it reads SMEALCNTVV…VFAVHVNKEF (186 aa). C324 provides a ligand contact to phytochromobilin. 2 PAS domains span residues 620 to 690 and 750 to 834; these read VTSE…LQGR and VEGD…LAGE. The 221-residue stretch at 904 to 1124 folds into the Histidine kinase domain; it reads YMRHAINKPL…TFILTAELAA (221 aa).

Belongs to the phytochrome family. As to quaternary structure, homodimer. Post-translationally, contains one covalently linked phytochromobilin chromophore.

Its function is as follows. Regulatory photoreceptor which exists in two forms that are reversibly interconvertible by light: the Pr form that absorbs maximally in the red region of the spectrum and the Pfr form that absorbs maximally in the far-red region. Photoconversion of Pr to Pfr induces an array of morphogenic responses, whereas reconversion of Pfr to Pr cancels the induction of those responses. Pfr controls the expression of a number of nuclear genes including those encoding the small subunit of ribulose-bisphosphate carboxylase, chlorophyll A/B binding protein, protochlorophyllide reductase, rRNA, etc. It also controls the expression of its own gene(s) in a negative feedback fashion. The chain is Phytochrome A (PHYA1) from Zea mays (Maize).